Consider the following 495-residue polypeptide: Aspartyl/glutamyl-tRNA(Asn/Gln) amidotransferase subunit B (495 aa).

It belongs to the GatB/GatE family. GatB subfamily. In terms of assembly, heterotrimer of A, B and C subunits.

The catalysed reaction is L-glutamyl-tRNA(Gln) + L-glutamine + ATP + H2O = L-glutaminyl-tRNA(Gln) + L-glutamate + ADP + phosphate + H(+). The enzyme catalyses L-aspartyl-tRNA(Asn) + L-glutamine + ATP + H2O = L-asparaginyl-tRNA(Asn) + L-glutamate + ADP + phosphate + 2 H(+). In terms of biological role, allows the formation of correctly charged Asn-tRNA(Asn) or Gln-tRNA(Gln) through the transamidation of misacylated Asp-tRNA(Asn) or Glu-tRNA(Gln) in organisms which lack either or both of asparaginyl-tRNA or glutaminyl-tRNA synthetases. The reaction takes place in the presence of glutamine and ATP through an activated phospho-Asp-tRNA(Asn) or phospho-Glu-tRNA(Gln). The polypeptide is Aspartyl/glutamyl-tRNA(Asn/Gln) amidotransferase subunit B (Methylocella silvestris (strain DSM 15510 / CIP 108128 / LMG 27833 / NCIMB 13906 / BL2)).